The primary structure comprises 397 residues: Acetyl-CoA acetyltransferase (397 aa).

Cys95 functions as the Acyl-thioester intermediate in the catalytic mechanism. 2 residues coordinate CoA: Tyr187 and Lys230. Tyr187 is a binding site for K(+). 3 residues coordinate K(+): Ala246, Gly247, and Ala249. Ser250 contacts CoA. Val347 contacts K(+). Catalysis depends on proton acceptor residues His351 and Cys379.

This sequence belongs to the thiolase-like superfamily. Thiolase family.

The protein resides in the peroxisome. It carries out the reaction 2 acetyl-CoA = acetoacetyl-CoA + CoA. Its function is as follows. Essential for n-decane utilization. The chain is Acetyl-CoA acetyltransferase (PAT1) from Yarrowia lipolytica (strain CLIB 122 / E 150) (Yeast).